Here is a 442-residue protein sequence, read N- to C-terminus: Cyclic 2,3-diphosphoglycerate synthetase (442 aa).

It belongs to the cyclic 2,3-diphosphoglycerate synthetase family.

The protein resides in the cytoplasm. The enzyme catalyses (2R)-2,3-bisphosphoglycerate + ATP + H(+) = cyclic (2R)-2,3-bisphosphoglycerate + ADP + phosphate. In terms of biological role, catalyzes the formation of cyclic 2,3-diphosphoglycerate (cDPG) by formation of an intramolecular phosphoanhydride bond at the expense of ATP. In Rubrobacter xylanophilus (strain DSM 9941 / JCM 11954 / NBRC 16129 / PRD-1), this protein is Cyclic 2,3-diphosphoglycerate synthetase.